A 314-amino-acid polypeptide reads, in one-letter code: Regulator of microtubule dynamics protein 1 (314 aa).

At lysine 165 the chain carries N6-succinyllysine. TPR repeat units follow at residues 168–204 and 222–258; these read AICL…NPKD and PWYQ…DPNF.

Belongs to the RMDN family. Interacts with microtubules.

The protein resides in the cytoplasm. It localises to the cytoskeleton. Its subcellular location is the spindle. The protein localises to the spindle pole. In Homo sapiens (Human), this protein is Regulator of microtubule dynamics protein 1 (RMDN1).